The primary structure comprises 176 residues: Tubulin polymerization-promoting protein family member 3 (176 aa).

Alanine 2 carries the post-translational modification N-acetylalanine.

Belongs to the TPPP family.

The protein resides in the cytoplasm. Its subcellular location is the cytoskeleton. In terms of biological role, regulator of microtubule dynamic that has microtubule bundling activity. Required for embryo implantation; possibly by regulating beta-catenin. Also required for decidualization via regulation of beta-catenin. In Bos taurus (Bovine), this protein is Tubulin polymerization-promoting protein family member 3 (TPPP3).